The following is a 461-amino-acid chain: Argininosuccinate lyase (461 aa).

Belongs to the lyase 1 family. Argininosuccinate lyase subfamily.

It localises to the cytoplasm. The catalysed reaction is 2-(N(omega)-L-arginino)succinate = fumarate + L-arginine. Its pathway is amino-acid biosynthesis; L-arginine biosynthesis; L-arginine from L-ornithine and carbamoyl phosphate: step 3/3. This is Argininosuccinate lyase from Bacillus subtilis (strain 168).